A 260-amino-acid polypeptide reads, in one-letter code: 3-oxoadipate CoA-transferase subunit B (260 aa).

The active site involves Glu51.

This sequence belongs to the 3-oxoacid CoA-transferase subunit B family. In terms of assembly, heterotetramer composed of 2 A and 2 B subunits.

The catalysed reaction is 3-oxoadipate + succinyl-CoA = 3-oxoadipyl-CoA + succinate. It participates in aromatic compound metabolism; beta-ketoadipate pathway; acetyl-CoA and succinyl-CoA from 3-oxoadipate: step 1/2. The polypeptide is 3-oxoadipate CoA-transferase subunit B (catJ) (Pseudomonas knackmussii (strain DSM 6978 / CCUG 54928 / LMG 23759 / B13)).